A 341-amino-acid polypeptide reads, in one-letter code: MKDRLISAVARPEDADVDTSLRPRLLAEYIGQEKVKETISVFIQAARGRGEPLDHVLLFGPPGLGKTTLANIIANEMGVSIRTTSGPAVERPGDLAAILTSLSQGDILFIDEIHRLSRTVEEVLYPAMEDYALDIVIGKGPGARSLRLELPRFTLVGATTRAGLLTSPLRDRFGVISRLEYYRPEDLVLIVNRSARILGIEITAEGAFEIARRSRGTPRVANRLLKRVRDYAQVRANGVITCEVAVEALKFLEVDPLGLDFADRRLLLTIIQKFGGGPVGLETIATAVNEEPETVEDVYEPYLIQLGMLARTPRGRVTTPLAFRHLGLEPAREETDQVSLW.

The tract at residues Met1–Tyr182 is large ATPase domain (RuvB-L). ATP contacts are provided by residues Leu21, Arg22, Gly63, Lys66, Thr67, Thr68, Glu129–Tyr131, Arg172, Tyr182, and Arg219. Residue Thr67 coordinates Mg(2+). Residues Arg183–Glu253 are small ATPAse domain (RuvB-S). The segment at Pro256 to Trp341 is head domain (RuvB-H). Positions 311 and 316 each coordinate DNA.

The protein belongs to the RuvB family. Homohexamer. Forms an RuvA(8)-RuvB(12)-Holliday junction (HJ) complex. HJ DNA is sandwiched between 2 RuvA tetramers; dsDNA enters through RuvA and exits via RuvB. An RuvB hexamer assembles on each DNA strand where it exits the tetramer. Each RuvB hexamer is contacted by two RuvA subunits (via domain III) on 2 adjacent RuvB subunits; this complex drives branch migration. In the full resolvosome a probable DNA-RuvA(4)-RuvB(12)-RuvC(2) complex forms which resolves the HJ.

The protein localises to the cytoplasm. It catalyses the reaction ATP + H2O = ADP + phosphate + H(+). In terms of biological role, the RuvA-RuvB-RuvC complex processes Holliday junction (HJ) DNA during genetic recombination and DNA repair, while the RuvA-RuvB complex plays an important role in the rescue of blocked DNA replication forks via replication fork reversal (RFR). RuvA specifically binds to HJ cruciform DNA, conferring on it an open structure. The RuvB hexamer acts as an ATP-dependent pump, pulling dsDNA into and through the RuvAB complex. RuvB forms 2 homohexamers on either side of HJ DNA bound by 1 or 2 RuvA tetramers; 4 subunits per hexamer contact DNA at a time. Coordinated motions by a converter formed by DNA-disengaged RuvB subunits stimulates ATP hydrolysis and nucleotide exchange. Immobilization of the converter enables RuvB to convert the ATP-contained energy into a lever motion, pulling 2 nucleotides of DNA out of the RuvA tetramer per ATP hydrolyzed, thus driving DNA branch migration. The RuvB motors rotate together with the DNA substrate, which together with the progressing nucleotide cycle form the mechanistic basis for DNA recombination by continuous HJ branch migration. Branch migration allows RuvC to scan DNA until it finds its consensus sequence, where it cleaves and resolves cruciform DNA. The chain is Holliday junction branch migration complex subunit RuvB from Pelotomaculum thermopropionicum (strain DSM 13744 / JCM 10971 / SI).